The following is a 288-amino-acid chain: Ribosomal RNA small subunit methyltransferase I (288 aa).

It belongs to the methyltransferase superfamily. RsmI family.

It is found in the cytoplasm. The catalysed reaction is cytidine(1402) in 16S rRNA + S-adenosyl-L-methionine = 2'-O-methylcytidine(1402) in 16S rRNA + S-adenosyl-L-homocysteine + H(+). Its function is as follows. Catalyzes the 2'-O-methylation of the ribose of cytidine 1402 (C1402) in 16S rRNA. The sequence is that of Ribosomal RNA small subunit methyltransferase I from Vibrio cholerae serotype O1 (strain ATCC 39315 / El Tor Inaba N16961).